Reading from the N-terminus, the 168-residue chain is Peptide deformylase (168 aa).

The Fe cation site is built by Cys-91 and His-133. Glu-134 is an active-site residue. A Fe cation-binding site is contributed by His-137.

Belongs to the polypeptide deformylase family. Fe(2+) serves as cofactor.

It carries out the reaction N-terminal N-formyl-L-methionyl-[peptide] + H2O = N-terminal L-methionyl-[peptide] + formate. Functionally, removes the formyl group from the N-terminal Met of newly synthesized proteins. Requires at least a dipeptide for an efficient rate of reaction. N-terminal L-methionine is a prerequisite for activity but the enzyme has broad specificity at other positions. This is Peptide deformylase from Endomicrobium trichonymphae.